The primary structure comprises 1007 residues: uncharacterized protein (1007 aa).

The N-terminal stretch at M1 to A51 is a signal peptide. Residues M1 to A96 are compositionally biased toward low complexity. Disordered regions lie at residues M1–I186, T200–P224, N387–I533, T543–N562, E578–I645, T655–N674, and D712–I757. A compositionally biased stretch (polar residues) spans D118–T163. Positions H167–E176 are enriched in basic and acidic residues. Composition is skewed to polar residues over residues S177 to I186 and T200 to I210. Low complexity predominate over residues V423–V442. Polar residues predominate over residues S443–Q453. The span at I469 to S491 shows a compositional bias: low complexity. The segment covering D507–E523 has biased composition (polar residues). The segment covering A597–S618 has biased composition (acidic residues). The span at D619–E635 shows a compositional bias: low complexity. Positions D712–S730 are enriched in acidic residues. The segment covering T732–N743 has biased composition (polar residues).

Belongs to the chlamydial CPn_0572/CT_456/TC_0741 family.

This is an uncharacterized protein from Chlamydia muridarum (strain MoPn / Nigg).